The sequence spans 380 residues: Cytochrome b (380 aa).

4 helical membrane-spanning segments follow: residues 34–54 (FGSLLGICLATQILTGLLLAA), 78–99 (WLIRNLHANGASFFFICIYLHI), 114–134 (WNTGVILLLTLMATAFVGYVL), and 179–199 (FFTLHFLLPFMIMGLTLIHLT). Residues His84 and His98 each coordinate heme b. Heme b contacts are provided by His183 and His197. His202 is a binding site for a ubiquinone. 4 helical membrane-spanning segments follow: residues 227-247 (LKDTLGFMFMLLPLMTLALFS), 289-309 (LGGVLALAASVLILFLAPLLH), 321-341 (LFQLLFWTLTANLLILTWVGS), and 348-368 (FIIIGQLASLTYFTILLILFP).

It belongs to the cytochrome b family. In terms of assembly, the cytochrome bc1 complex contains 11 subunits: 3 respiratory subunits (MT-CYB, CYC1 and UQCRFS1), 2 core proteins (UQCRC1 and UQCRC2) and 6 low-molecular weight proteins (UQCRH/QCR6, UQCRB/QCR7, UQCRQ/QCR8, UQCR10/QCR9, UQCR11/QCR10 and a cleavage product of UQCRFS1). This cytochrome bc1 complex then forms a dimer. It depends on heme b as a cofactor.

Its subcellular location is the mitochondrion inner membrane. Functionally, component of the ubiquinol-cytochrome c reductase complex (complex III or cytochrome b-c1 complex) that is part of the mitochondrial respiratory chain. The b-c1 complex mediates electron transfer from ubiquinol to cytochrome c. Contributes to the generation of a proton gradient across the mitochondrial membrane that is then used for ATP synthesis. The chain is Cytochrome b (MT-CYB) from Grus nigricollis (Black-necked crane).